The following is a 483-amino-acid chain: Cobyric acid synthase (483 aa).

The 188-residue stretch at A251–F438 folds into the GATase cobBQ-type domain. The Nucleophile role is filled by C333. Residue H430 is part of the active site.

The protein belongs to the CobB/CobQ family. CobQ subfamily.

The protein operates within cofactor biosynthesis; adenosylcobalamin biosynthesis. Its function is as follows. Catalyzes amidations at positions B, D, E, and G on adenosylcobyrinic A,C-diamide. NH(2) groups are provided by glutamine, and one molecule of ATP is hydrogenolyzed for each amidation. In Brucella canis (strain ATCC 23365 / NCTC 10854 / RM-666), this protein is Cobyric acid synthase.